A 520-amino-acid chain; its full sequence is Sterile alpha motif domain-containing protein 3 (520 aa).

The 68-residue stretch at 4 to 71 (WSVEQVCSWL…KYKQNTQGLK (68 aa)) folds into the SAM domain. Residues 85–114 (TEAARDYRDEESSSPARHGEQMPSFYPAEN) form a disordered region.

The chain is Sterile alpha motif domain-containing protein 3 (SAMD3) from Homo sapiens (Human).